Reading from the N-terminus, the 133-residue chain is NADPH-dependent 7-cyano-7-deazaguanine reductase (133 aa).

Catalysis depends on Cys-49, which acts as the Thioimide intermediate. The Proton donor role is filled by Asp-56. Substrate is bound by residues 71–73 (IEL) and 90–91 (HE).

This sequence belongs to the GTP cyclohydrolase I family. QueF type 1 subfamily.

It localises to the cytoplasm. It catalyses the reaction 7-aminomethyl-7-carbaguanine + 2 NADP(+) = 7-cyano-7-deazaguanine + 2 NADPH + 3 H(+). It functions in the pathway tRNA modification; tRNA-queuosine biosynthesis. Catalyzes the NADPH-dependent reduction of 7-cyano-7-deazaguanine (preQ0) to 7-aminomethyl-7-deazaguanine (preQ1). This is NADPH-dependent 7-cyano-7-deazaguanine reductase from Leptospira interrogans serogroup Icterohaemorrhagiae serovar copenhageni (strain Fiocruz L1-130).